Reading from the N-terminus, the 303-residue chain is Major fimbrium anchoring subunit FimB (303 aa).

Residues 1–22 (MNDAKKYIVSVLILLVAGMFGG) form the signal peptide. A lipid anchor (N-palmitoyl cysteine) is attached at Cys23. The S-diacylglycerol cysteine moiety is linked to residue Cys23.

It belongs to the bacteroidetes fimbrillin superfamily. FimB/Mfa2 family. As to quaternary structure, fimB is not part of the fimbrium itself, but anchors the fimbrium in the outer membrane. Linear, head-to-tail oligomerization of fimbrial subunits mediates assembly of the fimbrium stalk, while the minor components FimC, FimD and FimE probably form the fimbrium tip. The anchoring subunit FimB limits fimbrium length and is important for solid fimbrium attachment to the outer membrane. In its absence, the major fimbriae become very long and are easily detached from the membrane.

Its subcellular location is the cell outer membrane. Functionally, anchoring subunit of the major fimbriae. Regulates fimbrial length. These filamentous pili are attached to the cell surface; they mediate biofilm formation, adhesion onto host cells and onto other bacteria that are part of the oral microbiome. Fimbriae of P.gingivalis are major virulence factors. The sequence is that of Major fimbrium anchoring subunit FimB from Porphyromonas gingivalis (strain ATCC BAA-308 / W83).